The following is a 111-amino-acid chain: Phosphoribosyl-ATP pyrophosphatase (111 aa).

It belongs to the PRA-PH family.

It is found in the cytoplasm. The catalysed reaction is 1-(5-phospho-beta-D-ribosyl)-ATP + H2O = 1-(5-phospho-beta-D-ribosyl)-5'-AMP + diphosphate + H(+). It participates in amino-acid biosynthesis; L-histidine biosynthesis; L-histidine from 5-phospho-alpha-D-ribose 1-diphosphate: step 2/9. This Azospirillum brasilense protein is Phosphoribosyl-ATP pyrophosphatase (hisE).